Here is a 542-residue protein sequence, read N- to C-terminus: MPRRGLILHTRTHWLLLGLALLCSLVLFMYLLECAPQTDGNASLPGVVGENYGKEYYQALLQEQEEHYQTRATSLKRQIAQLKQELQEMSEKMRSLQERRNVGANGIGYQSNKEQAPSDLLEFLHSQIDKAEVSIGAKLPSEYGVIPFESFTLMKVFQLEMGLTRHPEEKPVRKDKRDELVEVIEAGLEVINNPDEDDEQEDEEGPLGEKLIFNENDFVEGYYRTERDKGTQYELFFKKADLTEYRHVTLFRPFGPLMKVKSEMIDITRSIINIIVPLAERTEAFVQFMQNFRDVCIHQDKKIHLTVVYFGKEGLSKVKSILESVTSESNFHNYTLVSLNEEFNRGRGLNVGARAWDKGEVLMFFCDVDIYFSAEFLNSCRLNAEPGKKVFYPVVFSLYNPAIVYANQEVPPPVEQQLVHKKDSGFWRDFGFGMTCQYRSDFLTIGGFDMEVKGWGGEDVHLYRKYLHGDLIVIRTPVPGLFHLWHEKRCADELTPEQYRMCIQSKAMNEASHSHLGMLVFREEIETHLHKQAYRTNSEAVG.

At 1 to 11 (MPRRGLILHTR) the chain is on the cytoplasmic side. A helical; Signal-anchor for type II membrane protein membrane pass occupies residues 12 to 32 (THWLLLGLALLCSLVLFMYLL). Over 33–542 (ECAPQTDGNA…AYRTNSEAVG (510 aa)) the chain is Lumenal. Asn41 is a glycosylation site (N-linked (GlcNAc...) asparagine). Residues 59–105 (ALLQEQEEHYQTRATSLKRQIAQLKQELQEMSEKMRSLQERRNVGAN) are a coiled coil. Residue Asn333 is glycosylated (N-linked (GlcNAc...) asparagine). Asp369 and His486 together coordinate a divalent metal cation.

It belongs to the chondroitin N-acetylgalactosaminyltransferase family. In terms of tissue distribution, ubiquitous.

It is found in the golgi apparatus. Its subcellular location is the golgi stack membrane. The enzyme catalyses 3-O-(beta-D-GlcA-(1-&gt;3)-beta-D-Gal-(1-&gt;3)-beta-D-Gal-(1-&gt;4)-beta-D-Xyl)-L-seryl-[protein] + UDP-N-acetyl-alpha-D-galactosamine = 3-O-(beta-D-GalNAc-(1-&gt;4)-beta-D-GlcA-(1-&gt;3)-beta-D-Gal-(1-&gt;3)-beta-D-Gal-(1-&gt;4)-beta-D-Xyl)-L-seryl-[protein] + UDP + H(+). Its function is as follows. Transfers 1,4-N-acetylgalactosamine (GalNAc) from UDP-GalNAc to the non-reducing end of glucuronic acid (GlcUA). Required for addition of the first GalNAc to the core tetrasaccharide linker and for elongation of chondroitin chains. This Homo sapiens (Human) protein is Chondroitin sulfate N-acetylgalactosaminyltransferase 2 (CSGALNACT2).